Consider the following 299-residue polypeptide: Acetylglutamate kinase (299 aa).

Substrate contacts are provided by residues glycine 72–glycine 73, arginine 94, and asparagine 196.

It belongs to the acetylglutamate kinase family. ArgB subfamily.

The protein localises to the cytoplasm. It carries out the reaction N-acetyl-L-glutamate + ATP = N-acetyl-L-glutamyl 5-phosphate + ADP. The protein operates within amino-acid biosynthesis; L-arginine biosynthesis; N(2)-acetyl-L-ornithine from L-glutamate: step 2/4. Catalyzes the ATP-dependent phosphorylation of N-acetyl-L-glutamate. This Burkholderia thailandensis (strain ATCC 700388 / DSM 13276 / CCUG 48851 / CIP 106301 / E264) protein is Acetylglutamate kinase.